We begin with the raw amino-acid sequence, 906 residues long: MLSLVQKIIGSRNERFIKKVSRIVQKINSLEPEFEKLSDEQLKAKTFEYRERLANGEILDNLLPEAFATVREAGKRTKNMRHYDVQLIGGIVLHQGKVAEMRTGEGKTLVATLPAYLNALTCDGVHVITVNDYLAKRDAELMSDIYEFLGMSVGVIVADLNPQQRKEAYACDITYGTNNEFGFDYLRDNMAYEKEQQVQRSRNYAIIDEVDSILIDEARTPLIISGASDDSSEMYNLFNRLVPYLEKQEKEEVENEQEQRDFYVDEKSKNAYLTEKGYAKIENMLKKEGILEEDDNLYSPHNITKMHYLNACLRAHSLYQLNIDYIVRDREIVIIDESTGRAMPGRRWSDGLHQAIEAKEGVKINAENQTMASITFQNFFKLYNKIAGMTGTADTEAFELHSIYGLEVIIIPTNKPMIRKDHHDEIYGSVREKFDAIVEDIKERISKGQPVLVGTASIEASEVLSTLLKKKKIRHNVLNAKQHEKEASIIAMAGYPDNVTIATNMAGRGTDIILGGNLEVEIAQLEDPTPEDIAQIKAEWLKRNEAVKKAGGLCIIGSERHDSRRIDNQLRGRAARQGDPGESKFYLSMDDNLLRIFASQSMAERVKKGLKGGESLAFGFMSKVISKAQGKVESYHFDIRKNLLEYDNVVNTQRKVIYEQRQSFLEAEDVSDILADIRIDVAEQLFHDYVPAGSMHELWDLEGLEKALKSDFMIELDLQKLYEEDDSLGEEDLKRLVREAIEIEFVEKTKNLDSGAVRQFEKFSLLQSLDTHWREHLSSIDHLRNSINLRGYAQKDPKNEYKKEAFELFSTMLDNFKYEVISSLAKIRIVTEEETQRAQQEWQESMSDIKAEHESVIDNNQRHDEDEQEEAPKVQQVRREGPKVKRNDPCPCGSGKKYKQCHSKVE.

ATP contacts are provided by residues Gln-86, 104-108 (GEGKT), and Asp-511. Basic and acidic residues-rich tracts occupy residues 853–865 (HESVIDNNQRHDE) and 877–888 (VRREGPKVKRND). The interval 853–906 (HESVIDNNQRHDEDEQEEAPKVQQVRREGPKVKRNDPCPCGSGKKYKQCHSKVE) is disordered. Zn(2+) contacts are provided by Cys-890, Cys-892, Cys-901, and His-902. Positions 896–906 (KKYKQCHSKVE) are enriched in basic residues.

It belongs to the SecA family. Monomer and homodimer. Part of the essential Sec protein translocation apparatus which comprises SecA, SecYEG and auxiliary proteins SecDF-YajC and YidC. Zn(2+) is required as a cofactor.

The protein localises to the cell inner membrane. It is found in the cytoplasm. The catalysed reaction is ATP + H2O + cellular proteinSide 1 = ADP + phosphate + cellular proteinSide 2.. Part of the Sec protein translocase complex. Interacts with the SecYEG preprotein conducting channel. Has a central role in coupling the hydrolysis of ATP to the transfer of proteins into and across the cell membrane, serving both as a receptor for the preprotein-SecB complex and as an ATP-driven molecular motor driving the stepwise translocation of polypeptide chains across the membrane. The protein is Protein translocase subunit SecA of Francisella tularensis subsp. mediasiatica (strain FSC147).